We begin with the raw amino-acid sequence, 281 residues long: Acyl-[acyl-carrier-protein]--UDP-N-acetylglucosamine O-acyltransferase (281 aa).

It belongs to the transferase hexapeptide repeat family. LpxA subfamily. In terms of assembly, homotrimer.

It localises to the cytoplasm. It catalyses the reaction a (3R)-hydroxyacyl-[ACP] + UDP-N-acetyl-alpha-D-glucosamine = a UDP-3-O-[(3R)-3-hydroxyacyl]-N-acetyl-alpha-D-glucosamine + holo-[ACP]. It participates in glycolipid biosynthesis; lipid IV(A) biosynthesis; lipid IV(A) from (3R)-3-hydroxytetradecanoyl-[acyl-carrier-protein] and UDP-N-acetyl-alpha-D-glucosamine: step 1/6. Its function is as follows. Involved in the biosynthesis of lipid A, a phosphorylated glycolipid that anchors the lipopolysaccharide to the outer membrane of the cell. This Rickettsia bellii (strain OSU 85-389) protein is Acyl-[acyl-carrier-protein]--UDP-N-acetylglucosamine O-acyltransferase.